The chain runs to 859 residues: MQEQYNPSEIEALVQKHWHDNKTFEVTEDANKEKFYCLSMFPYPSGRLHMGHVRNYTIGDVVARFQRLQGKNVLQPIGWDSFGLPAENAAINNKTAPAPWTYENIEYMKNQLKLLGFGYDWSREIATCTPEYYRWEQWFFTKLYEKGLVYKKTASVNWCPNDETVLANEQVQDGCCWRCDTPVEQKEIPQWFIKITAYAEELLNDIDTLDGWPDQVKTMQRNWIGRSEGVEMTFGVAGHDKSFDIYTTRPDTLMGVTYVAIAAGHPLAEIAAHTNPELAAFIDECKNSTTSEAELATMEKRGVATGLFAIHPITGKQVPIWAANFVLMNYGTGAVMSVPGHDQRDFEFAKKYGLAIEAVIKPVDGDVDISEAAYTEKGVLFNSGEFDGLDFEAGFNAIANKLVAEGKGKRQVNYRLRDWGVSRQRYWGAPIPMVTLADGTVIPTPADQLPVLLPEDVVMDGIQSPIKADKEWAKTQVNGQDALRETDTFDTFMESSWYYARYCSPHADEMLDPAKANYWLPVDQYIGGIEHACMHLLYFRFFHKLLRDAGLVNSNEPAKQLLTQGMVLADAFYYINEKGARVWVSPLDVATTEKDDKGRITKAIDKDGNELVYTGMSKMSKSKNNGIDPQVMVEKYGADTVRLFMMFASPPELTLEWQESGVEGAHRFIKRLWKLANEHVNQDNSEALDVSTLTSDQKALRREVHKTIAKVTDDIGRRQMFNTAVAAVMELMNHLQKAPQTTGQDNAIIGEALSAIVRLLYPIIPHVSFNLWNELGNASNIEDSQWPVVDEAALVEDSKLIVVQVNGKVRAKITVAADADKESVEALGMSDEHVIKYLDGLTVRKVIYVPGKLLSIVAN.

The 'HIGH' region motif lies at 42-52; that stretch reads PYPSGRLHMGH. Residues 618–622 carry the 'KMSKS' region motif; sequence KMSKS. Lys-621 is an ATP binding site.

This sequence belongs to the class-I aminoacyl-tRNA synthetase family.

It localises to the cytoplasm. It catalyses the reaction tRNA(Leu) + L-leucine + ATP = L-leucyl-tRNA(Leu) + AMP + diphosphate. This Shewanella baltica (strain OS155 / ATCC BAA-1091) protein is Leucine--tRNA ligase.